The chain runs to 461 residues: Cysteine--tRNA ligase (461 aa).

Cysteine 28 provides a ligand contact to Zn(2+). The 'HIGH' region motif lies at 30–40; sequence ITVYDLCHIGH. 3 residues coordinate Zn(2+): cysteine 209, histidine 234, and glutamate 238. Residues 266 to 270 carry the 'KMSKS' region motif; sequence KMSKS. Lysine 269 contacts ATP.

It belongs to the class-I aminoacyl-tRNA synthetase family. As to quaternary structure, monomer. Requires Zn(2+) as cofactor.

The protein localises to the cytoplasm. The enzyme catalyses tRNA(Cys) + L-cysteine + ATP = L-cysteinyl-tRNA(Cys) + AMP + diphosphate. The sequence is that of Cysteine--tRNA ligase from Cronobacter sakazakii (strain ATCC BAA-894) (Enterobacter sakazakii).